Here is a 293-residue protein sequence, read N- to C-terminus: Heterogeneous nuclear ribonucleoprotein D-like-A (293 aa).

Positions 1–21 (MAGFGAAPDFNEGSKINASKN) are disordered. RRM domains are found at residues 26-108 (GKMF…KGKE) and 111-188 (KKVF…AAQP). Disordered stretches follow at residues 193–224 (RQQQQKQQRGGRGAVTGRGGTRGRGRGQGWNQ) and 274–293 (QSTYGKARGGGNHQNNYQPY). Residues 202-222 (GGRGAVTGRGGTRGRGRGQGW) are compositionally biased toward gly residues.

Its subcellular location is the nucleus. The protein resides in the cytoplasm. Functionally, acts as a transcriptional regulator. Binds DNA and RNA. This Xenopus laevis (African clawed frog) protein is Heterogeneous nuclear ribonucleoprotein D-like-A (hnrnpdl-a).